Reading from the N-terminus, the 442-residue chain is 5-methylthioadenosine/S-adenosylhomocysteine deaminase (442 aa).

H70 and H72 together coordinate Zn(2+). Substrate is bound by residues E99 and H191. Zn(2+) is bound at residue H218. Residues E221 and D306 each coordinate substrate. Residue D306 participates in Zn(2+) binding.

Belongs to the metallo-dependent hydrolases superfamily. MTA/SAH deaminase family. Zn(2+) is required as a cofactor.

It catalyses the reaction S-adenosyl-L-homocysteine + H2O + H(+) = S-inosyl-L-homocysteine + NH4(+). The enzyme catalyses S-methyl-5'-thioadenosine + H2O + H(+) = S-methyl-5'-thioinosine + NH4(+). Functionally, catalyzes the deamination of 5-methylthioadenosine and S-adenosyl-L-homocysteine into 5-methylthioinosine and S-inosyl-L-homocysteine, respectively. Is also able to deaminate adenosine. The sequence is that of 5-methylthioadenosine/S-adenosylhomocysteine deaminase from Nitratidesulfovibrio vulgaris (strain DP4) (Desulfovibrio vulgaris).